The chain runs to 918 residues: Exostosin-like 3 (918 aa).

Over 1–30 (MTGYTMLRNGGVGNGGQTCMLRWSNRIRLT) the chain is Cytoplasmic. Residues 1–140 (MTGYTMLRNG…LKNVISQTEH (140 aa)) form a required for interaction with REG3A region. The chain crosses the membrane as a helical; Signal-anchor for type II membrane protein span at residues 31-51 (WLSFTLFIILVFFPLIAHYYL). The Lumenal portion of the chain corresponds to 52 to 918 (TTLDEADEAG…HDKTKCFKFI (867 aa)). Cystine bridges form between Cys-177–Cys-182 and Cys-188–Cys-236. The N-linked (GlcNAc...) asparagine glycan is linked to Asn-290. Phosphoserine is present on Ser-361. Residues Cys-399 and Cys-414 are joined by a disulfide bond. The N-linked (GlcNAc...) asparagine glycan is linked to Asn-591. Leu-667, Arg-671, Asn-696, Asn-722, Arg-727, Asp-743, Asp-744, and Asp-745 together coordinate UDP-N-acetyl-alpha-D-glucosamine. Asp-745 serves as a coordination point for Mn(2+). N-linked (GlcNAc...) asparagine glycosylation occurs at Asn-789. Residues Cys-830 and Cys-878 are joined by a disulfide bond. Residues Glu-831, Asp-832, and Arg-875 each contribute to the UDP-N-acetyl-alpha-D-glucosamine site. The active site involves Asp-832.

It belongs to the glycosyltransferase 47 family. Homodimer; disulfide-linked. Interacts with REG3A. The cofactor is Mn(2+). As to expression, expressed in pancreatic islet beta-cells. Expressed in lung epithelial cells. Expressed in microglia.

The protein resides in the endoplasmic reticulum membrane. It is found in the golgi apparatus. It localises to the cell membrane. Its subcellular location is the nucleus. It catalyses the reaction 3-O-(beta-D-GlcA-(1-&gt;3)-beta-D-Gal-(1-&gt;3)-beta-D-Gal-(1-&gt;4)-beta-D-Xyl)-L-seryl-[protein] + UDP-N-acetyl-alpha-D-glucosamine = 3-O-(alpha-D-GlcNAc-(1-&gt;4)-beta-D-GlcA-(1-&gt;3)-beta-D-Gal-(1-&gt;3)-beta-D-Gal-(1-&gt;4)-beta-D-Xyl)-L-seryl-[protein] + UDP + H(+). It participates in glycan metabolism; heparan sulfate biosynthesis. Functionally, glycosyltransferase which regulates the biosynthesis of heparan sulfate (HS). Initiates HS synthesis by transferring the first N-acetyl-alpha-D-glucosamine (alpha-GlcNAc) residue (GlcNAcT-I activity) to the tetrasaccharide linker (GlcA-Gal-Gal-Xyl-)Ser core linker. May also transfer alpha-GlcNAc residues during HS elongation (GlcNAcT-II activity). Lacks glucuronyl transferase II (GlcAT-II) activity. Important for both skeletal development and hematopoiesis, through the formation of HS proteoglycans (HSPGs). Through the synthesis of HS, regulates postnatal pancreatic islet maturation and insulin secretion. Its function is as follows. Receptor for REG3A, REG3B and REG3G, induces the activation of downstream signaling pathways such as PI3K-AKT or RAS-RAF-MEK-ERK signaling pathway. Required for the function of REG3A in regulating keratinocyte proliferation and differentiation. Required for the inhibition of skin inflammation mediated by REG3A through the activation of PI3K-AKT-STAT3 pathway. Required for the function of REG3A and REG3G in glucose tolerance in pancreas. Expressed in microglia, is activated by nociceptor-derived REG3G in response to endotoxins, leading to the inhibition of kynurenine pathway to prevent endotoxic death. This is Exostosin-like 3 from Mus musculus (Mouse).